Consider the following 159-residue polypeptide: Cathelicidin-5 (159 aa).

Positions 1–29 (METQRASLSLGRWSLWLLLLGLALPSASA) are cleaved as a signal peptide. Glutamine 30 bears the Pyrrolidone carboxylic acid mark. The propeptide occupies 30–131 (QALSYREAVL…DITCAVPQSV (102 aa)). 2 cysteine pairs are disulfide-bonded: cysteine 86-cysteine 97 and cysteine 108-cysteine 125.

This sequence belongs to the cathelicidin family.

The protein resides in the secreted. Functionally, exerts a potent antimicrobial activity against Gram-negative and Gram-positive bacteria, including methicillin-resistant Staphylococcus aureus, and fungi. The protein is Cathelicidin-5 (CATHL5) of Bos taurus (Bovine).